Consider the following 348-residue polypeptide: Heat-inducible transcription repressor HrcA (348 aa).

It belongs to the HrcA family.

Its function is as follows. Negative regulator of class I heat shock genes (grpE-dnaK-dnaJ and groELS operons). Prevents heat-shock induction of these operons. This Syntrophobacter fumaroxidans (strain DSM 10017 / MPOB) protein is Heat-inducible transcription repressor HrcA.